A 237-amino-acid chain; its full sequence is Listeriolysin regulatory protein (237 aa).

In terms of domain architecture, HTH crp-type spans 137–212 (NGKLGSICGQ…NSCFYVQNLD (76 aa)).

Positively regulates expression of listeriolysin, of 1-phosphadidylinositol phosphodiesterase (PI-PLC) and other virulence factors. The polypeptide is Listeriolysin regulatory protein (prfA) (Listeria monocytogenes serovar 1/2a (strain ATCC BAA-679 / EGD-e)).